Consider the following 421-residue polypeptide: FAD-dependent monooxygenase atnJ (421 aa).

A helical transmembrane segment spans residues 9-29; that stretch reads LVPLHVVIVGAGIGGLSAAVA. Positions 41 and 54 each coordinate FAD. The active site involves Arg188. Asp303 and Val316 together coordinate FAD. The segment at 371–392 is disordered; sequence RDGDAQAARDSQRKATSGTGQN.

The protein belongs to the paxM FAD-dependent monooxygenase family. Requires FAD as cofactor.

The protein resides in the membrane. Its pathway is secondary metabolite biosynthesis; terpenoid biosynthesis. Its function is as follows. FAD-dependent monooxygenase; part of the gene cluster that mediates the biosynthesis of the meroterpenoids arthripenoids. The pathway begins with the HR-PKS atnH that catalyzes two chain-extension steps to form a reduced triketide, which then primes the SAT domain in the NR-PKS atnG to initiate three more cycles of extension to give a linear hexaketide corresponding to the polyketide part of arthripenoids. The FAD-dependent monooxygenase atnJ then performs an oxidative decarboxylation at C11 of the atnH/atnG product, via an electrophilic aromatic hydroxylation with concomitant ipso-decarboxylation. The membrane-bound polyprenyl transferase atnF then introduces a farnesyl group before the FAD-dependent monooxygenase atnK functions as the first epoxidase on terminal C12'-C13' olefin, followed by a second epoxidation on C7'-C8' catalyzed by atnA. The terpene cyclase/mutase atnI then initiates the sequential tricyclic ring formation through protonation of the terminal epoxide and catalyzes the regioselective and stereoselective 6/6/6-tricyclic ring formation. The cytochrome P450 monooxygenase atnM is responsible for hydroxylating both C1' and C10'. The next steps may involve ketoreduction and acetyl transfer by the ketoreductase atnB and the acetyltransferase atnC, and lead to the production of arthripenoid B, the final biosynthetic product of the atn cluster. The hydroquinone moiety in arthripenoid B is prone to undergo spontaneous oxidation to afford a benzoquinone compound, a key intermediate for generating structure diversity. For instance, addition of a cysteine followed by ring contraction gives arthripenoid A, tautomerization gives the main product arthripenoid C, addition of a molecular of water or amine affords arthripenoid D or E, respectively, and loss of one water forms arthripenoid F. The sequence is that of FAD-dependent monooxygenase atnJ from Arthrinium sp.